The following is a 478-amino-acid chain: H(+)/Cl(-) exchange transporter ClcA (478 aa).

Residues 1–32 (MTHSTQQLSPEGVAEGKRGRLIRELVNRDKTP) lie on the Cytoplasmic side of the membrane. The chain crosses the membrane as a helical span at residues 33-69 (LIILIMAAVVGVVTGLLGVAFDRGVDWVQQQRLLALA). The Periplasmic segment spans residues 70–76 (NVADYAL). A helical membrane pass occupies residues 77–100 (LVWPLAFIMSALLAMMGYFLVSRF). Positions 106-110 (GSGIP) match the Selectivity filter part_1 motif. Ser-107 is a binding site for chloride. The helical intramembrane region spans 109–116 (IPEIEGAM). Residues 117-123 (EEMRPVR) lie on the Cytoplasmic side of the membrane. Transmembrane regions (helical) follow at residues 124-141 (WWRV…TLGA) and 148-166 (EGPM…VDIF). The short motif at 146–150 (GREGP) is the Selectivity filter part_2 element. Residues 167–176 (RLRSPEARHS) are Cytoplasmic-facing. 2 intramembrane regions (helical) span residues 177 to 189 (LLAT…LSAA) and 193 to 201 (PLAGILFVI). Residues 202-214 (EEMRSQFRYSLVS) are Cytoplasmic-facing. Residues 215 to 232 (IKAVFIGVITSTIVYRYF) traverse the membrane as a helical segment. At 233–252 (NGERAIIEVGKLSDAPLNTL) the chain is on the periplasmic side. A helical membrane pass occupies residues 253–281 (WLYLLLGIIFGAVGVIFNALIFRTQDMFV). Residues 282–287 (RFHGGD) are Cytoplasmic-facing. Residues 288-309 (WRKLVLIGGLLGGMCGLLALLH) traverse the membrane as a helical segment. The Periplasmic portion of the chain corresponds to 310-329 (GNAVGGGFALIPIAAAGNFS). Transmembrane regions (helical) follow at residues 330 to 349 (IGML…LCFG) and 355 to 376 (GIFA…LSCA). The Selectivity filter part_3 signature appears at 355–359 (GIFAP). The chloride site is built by Ile-356 and Phe-357. The Periplasmic portion of the chain corresponds to 377 to 386 (HFFPQYGIEA). An intramembrane region (helical) is located at residues 387–401 (GTFAIAGMGALFAAS). An intramembrane region (note=Loop between two helices) is located at residues 402–404 (VRA). Positions 405 to 416 (PLTGIVLVLEMT) form an intramembrane region, helical. An intramembrane region (note=Loop between two helices) is located at residues 417–421 (DNYQL). The chain crosses the membrane as a helical span at residues 422–438 (ILPMIVTCLGATLIAQF). At 439 to 478 (MGGKPLYSAILARTLAKQEQARATVIAQEPAVENTPQIGK) the chain is on the cytoplasmic side. A chloride-binding site is contributed by Tyr-445.

Belongs to the chloride channel (TC 2.A.49) family. ClcA subfamily. As to quaternary structure, homodimer.

Its subcellular location is the cell inner membrane. It carries out the reaction 2 chloride(in) + H(+)(out) = 2 chloride(out) + H(+)(in). Functionally, proton-coupled chloride transporter. Functions as antiport system and exchanges two chloride ions for 1 proton. Probably acts as an electrical shunt for an outwardly-directed proton pump that is linked to amino acid decarboxylation, as part of the extreme acid resistance (XAR) response. The protein is H(+)/Cl(-) exchange transporter ClcA of Yersinia pestis bv. Antiqua (strain Antiqua).